We begin with the raw amino-acid sequence, 259 residues long: MLTKRIIPCLDIKNGKVVKGINFVGLKEIGDPVELAKIYEEQCADEIVFLDITASFEEREIIGELIGRAARELSIPLTVGGGIRSINDFRRILASGADKVSINSAAIENPEFIHQAANEFGVQCVVVAIDAKANESGSSFEVYIKGGRENAGIDLVEWAKKCEKLGAGEILLTSMDKDGTKTGYDLKMLNAVCSAVNIPVVASGGCGSISDIIDVFEKTKSDAALVASLFHYGEATVDEVKEELIKNRIPARIIKKEII.

Residues Asp-11 and Asp-130 contribute to the active site.

This sequence belongs to the HisA/HisF family. As to quaternary structure, heterodimer of HisH and HisF.

It is found in the cytoplasm. The catalysed reaction is 5-[(5-phospho-1-deoxy-D-ribulos-1-ylimino)methylamino]-1-(5-phospho-beta-D-ribosyl)imidazole-4-carboxamide + L-glutamine = D-erythro-1-(imidazol-4-yl)glycerol 3-phosphate + 5-amino-1-(5-phospho-beta-D-ribosyl)imidazole-4-carboxamide + L-glutamate + H(+). Its pathway is amino-acid biosynthesis; L-histidine biosynthesis; L-histidine from 5-phospho-alpha-D-ribose 1-diphosphate: step 5/9. Its function is as follows. IGPS catalyzes the conversion of PRFAR and glutamine to IGP, AICAR and glutamate. The HisF subunit catalyzes the cyclization activity that produces IGP and AICAR from PRFAR using the ammonia provided by the HisH subunit. This chain is Imidazole glycerol phosphate synthase subunit HisF, found in Lactococcus lactis subsp. cremoris (strain MG1363).